Reading from the N-terminus, the 213-residue chain is Thymidylate kinase (213 aa).

Position 10–17 (10–17 (GLEGAGKT)) interacts with ATP.

Belongs to the thymidylate kinase family.

The enzyme catalyses dTMP + ATP = dTDP + ADP. Its function is as follows. Phosphorylation of dTMP to form dTDP in both de novo and salvage pathways of dTTP synthesis. This is Thymidylate kinase from Klebsiella pneumoniae (strain 342).